The chain runs to 199 residues: Thymidine kinase (199 aa).

Residues 15-22 and 88-91 contribute to the ATP site; these read GSMFSGKS and DEVQ. Glu89 (proton acceptor) is an active-site residue. Cys145, Cys148, Cys183, and His186 together coordinate Zn(2+).

Belongs to the thymidine kinase family. In terms of assembly, homotetramer.

It is found in the cytoplasm. It catalyses the reaction thymidine + ATP = dTMP + ADP + H(+). The protein is Thymidine kinase of Staphylococcus aureus (strain USA300).